We begin with the raw amino-acid sequence, 378 residues long: Carbamoyl phosphate synthase small chain (378 aa).

The CPSase stretch occupies residues 1–189 (MTKPAILALA…DSHPEIPAGE (189 aa)). L-glutamine is bound by residues serine 47, glycine 241, and glycine 243. Positions 193-378 (HVVAYDYGVK…RFISAMAERR (186 aa)) constitute a Glutamine amidotransferase type-1 domain. Catalysis depends on cysteine 269, which acts as the Nucleophile. 5 residues coordinate L-glutamine: leucine 270, glutamine 273, asparagine 311, glycine 313, and phenylalanine 314. Catalysis depends on residues histidine 353 and glutamate 355.

This sequence belongs to the CarA family. In terms of assembly, composed of two chains; the small (or glutamine) chain promotes the hydrolysis of glutamine to ammonia, which is used by the large (or ammonia) chain to synthesize carbamoyl phosphate. Tetramer of heterodimers (alpha,beta)4.

The enzyme catalyses hydrogencarbonate + L-glutamine + 2 ATP + H2O = carbamoyl phosphate + L-glutamate + 2 ADP + phosphate + 2 H(+). It carries out the reaction L-glutamine + H2O = L-glutamate + NH4(+). It participates in amino-acid biosynthesis; L-arginine biosynthesis; carbamoyl phosphate from bicarbonate: step 1/1. It functions in the pathway pyrimidine metabolism; UMP biosynthesis via de novo pathway; (S)-dihydroorotate from bicarbonate: step 1/3. Functionally, small subunit of the glutamine-dependent carbamoyl phosphate synthetase (CPSase). CPSase catalyzes the formation of carbamoyl phosphate from the ammonia moiety of glutamine, carbonate, and phosphate donated by ATP, constituting the first step of 2 biosynthetic pathways, one leading to arginine and/or urea and the other to pyrimidine nucleotides. The small subunit (glutamine amidotransferase) binds and cleaves glutamine to supply the large subunit with the substrate ammonia. The protein is Carbamoyl phosphate synthase small chain of Pseudomonas aeruginosa (strain ATCC 15692 / DSM 22644 / CIP 104116 / JCM 14847 / LMG 12228 / 1C / PRS 101 / PAO1).